Consider the following 568-residue polypeptide: Phenylalanine--tRNA ligase beta subunit (568 aa).

Residues 278–353 enclose the B5 domain; the sequence is LTPKSFEVEL…IAYGYNEIEP (76 aa). Mg(2+) contacts are provided by Asp331, Asp337, Glu340, and Asp341.

It belongs to the phenylalanyl-tRNA synthetase beta subunit family. Type 2 subfamily. Tetramer of two alpha and two beta subunits. Mg(2+) serves as cofactor.

It is found in the cytoplasm. The enzyme catalyses tRNA(Phe) + L-phenylalanine + ATP = L-phenylalanyl-tRNA(Phe) + AMP + diphosphate + H(+). This chain is Phenylalanine--tRNA ligase beta subunit, found in Thermococcus gammatolerans (strain DSM 15229 / JCM 11827 / EJ3).